The following is a 372-amino-acid chain: Tyrosine--tRNA ligase 1 (372 aa).

The L-tyrosine site is built by Tyr-37, Tyr-169, Gln-173, Asp-176, and Gln-191. The 'KMSKS' region motif lies at 246–250; the sequence is KMSKS. Residue Lys-249 participates in ATP binding.

Belongs to the class-I aminoacyl-tRNA synthetase family. TyrS type 4 subfamily. Homodimer.

It localises to the cytoplasm. The catalysed reaction is tRNA(Tyr) + L-tyrosine + ATP = L-tyrosyl-tRNA(Tyr) + AMP + diphosphate + H(+). Its function is as follows. Catalyzes the attachment of tyrosine to tRNA(Tyr) in a two-step reaction: tyrosine is first activated by ATP to form Tyr-AMP and then transferred to the acceptor end of tRNA(Tyr). This chain is Tyrosine--tRNA ligase 1, found in Pyrobaculum aerophilum (strain ATCC 51768 / DSM 7523 / JCM 9630 / CIP 104966 / NBRC 100827 / IM2).